The following is a 117-amino-acid chain: Ig heavy chain V region 1-72 (117 aa).

A signal peptide spans 1–19 (MGWSCIMLFLAATATGVHS). The interval 20 to 49 (QVQLQQPGAELVKPGASVKLSCKASGYTFT) is framework-1. A disulfide bond links Cys-41 and Cys-115. Residues 50 to 54 (SYWMH) are complementarity-determining-1. Residues 55-68 (WVKQRPGRGLEWIG) are framework-2. A complementarity-determining-2 region spans residues 69 to 85 (RIDPNSGGTKYNEKFKS). The segment at 86-117 (KATLTVDKPSSTAYMQLSSLTSEDSAVYYCAR) is framework-3.

This chain is Ig heavy chain V region 1-72, found in Mus musculus (Mouse).